The primary structure comprises 156 residues: Small ribosomal subunit protein uS7 (156 aa).

This sequence belongs to the universal ribosomal protein uS7 family. As to quaternary structure, part of the 30S ribosomal subunit. Contacts proteins S9 and S11.

In terms of biological role, one of the primary rRNA binding proteins, it binds directly to 16S rRNA where it nucleates assembly of the head domain of the 30S subunit. Is located at the subunit interface close to the decoding center, probably blocks exit of the E-site tRNA. This Clostridium botulinum (strain Alaska E43 / Type E3) protein is Small ribosomal subunit protein uS7.